A 443-amino-acid polypeptide reads, in one-letter code: Glutamyl-tRNA reductase (443 aa).

Residues 49–52 (TCNR), Ser-109, 114–116 (EPQ), and Gln-120 contribute to the substrate site. The Nucleophile role is filled by Cys-50. 189–194 (GAGKMC) is a binding site for NADP(+). Residues 421 to 443 (PDSQQTGGDSVEKDADSKQDLTS) are disordered. Positions 430–443 (SVEKDADSKQDLTS) are enriched in basic and acidic residues.

It belongs to the glutamyl-tRNA reductase family. In terms of assembly, homodimer.

It carries out the reaction (S)-4-amino-5-oxopentanoate + tRNA(Glu) + NADP(+) = L-glutamyl-tRNA(Glu) + NADPH + H(+). Its pathway is porphyrin-containing compound metabolism; protoporphyrin-IX biosynthesis; 5-aminolevulinate from L-glutamyl-tRNA(Glu): step 1/2. Functionally, catalyzes the NADPH-dependent reduction of glutamyl-tRNA(Glu) to glutamate 1-semialdehyde (GSA). The protein is Glutamyl-tRNA reductase of Syntrophotalea carbinolica (strain DSM 2380 / NBRC 103641 / GraBd1) (Pelobacter carbinolicus).